A 256-amino-acid chain; its full sequence is UPF0246 protein Swoo_1284 (256 aa).

It belongs to the UPF0246 family.

In Shewanella woodyi (strain ATCC 51908 / MS32), this protein is UPF0246 protein Swoo_1284.